Consider the following 501-residue polypeptide: Glutamyl-tRNA(Gln) amidotransferase subunit A (501 aa).

Residues K80 and S155 each act as charge relay system in the active site. The Acyl-ester intermediate role is filled by S179.

This sequence belongs to the amidase family. GatA subfamily. In terms of assembly, heterotrimer of A, B and C subunits.

The enzyme catalyses L-glutamyl-tRNA(Gln) + L-glutamine + ATP + H2O = L-glutaminyl-tRNA(Gln) + L-glutamate + ADP + phosphate + H(+). Allows the formation of correctly charged Gln-tRNA(Gln) through the transamidation of misacylated Glu-tRNA(Gln) in organisms which lack glutaminyl-tRNA synthetase. The reaction takes place in the presence of glutamine and ATP through an activated gamma-phospho-Glu-tRNA(Gln). This Cupriavidus pinatubonensis (strain JMP 134 / LMG 1197) (Cupriavidus necator (strain JMP 134)) protein is Glutamyl-tRNA(Gln) amidotransferase subunit A.